A 258-amino-acid polypeptide reads, in one-letter code: Methanol--corrinoid protein (258 aa).

In terms of domain architecture, B12-binding N-terminal spans 30-124 (AEELYPKDEL…NSGATPKTKG (95 aa)). Residues 123 to 248 (KGTVVCHVAE…DAIIAGTTDV (126 aa)) form the B12-binding domain. Histidine 136 serves as a coordination point for methylcob(III)alamin.

It belongs to the methylamine corrinoid protein family. Heterotetramer, composed of 2 MtaB and 2 MtaC subunits.

Harbors a corrinoid prosthetic group and acts as a methyl group carrier in methanogenesis in the methanol pathway. The methyl group of methanol is first transferred to the corrinoid prosthetic group of MtaC in the cob(I)amide oxidation state. This reaction is mediated by MtaB. The methyl group from MtaC is then transferred to coenzyme M by MtaA. This is Methanol--corrinoid protein (mtaC) from Methanosarcina barkeri (strain Fusaro / DSM 804).